Reading from the N-terminus, the 587-residue chain is Probable phosphoribomutase (587 aa).

Substrate is bound by residues Thr49, Arg53, and 149–150 (SH). The Phosphoserine intermediate role is filled by Ser149. Residues Ser149, Asp306, Asp308, and Asp310 each coordinate Mg(2+). Ser149 carries the phosphoserine modification. Substrate contacts are provided by residues 310–311 (DR), Thr380, 404–406 (EEA), and Lys418.

This sequence belongs to the phosphohexose mutase family. Mg(2+) is required as a cofactor.

It is found in the cytoplasm. It localises to the nucleus. It carries out the reaction alpha-D-ribose 1-phosphate = D-ribose 5-phosphate. Its function is as follows. Converts ribose 1-phosphate to ribose 5-phosphate. Involved in ribose salvage via the pentose phosphate pathway. The sequence is that of Probable phosphoribomutase from Schizosaccharomyces pombe (strain 972 / ATCC 24843) (Fission yeast).